The sequence spans 541 residues: Membrane protein insertase YidC (541 aa).

A run of 5 helical transmembrane segments spans residues 7–27, 345–365, 415–435, 453–473, and 492–512; these read LLFM…QVDY, LVQN…AVLY, LGGC…YWTF, LSAQ…MFLL, and FMPL…VLYW.

Belongs to the OXA1/ALB3/YidC family. Type 1 subfamily. In terms of assembly, interacts with the Sec translocase complex via SecD. Specifically interacts with transmembrane segments of nascent integral membrane proteins during membrane integration.

Its subcellular location is the cell inner membrane. Functionally, required for the insertion and/or proper folding and/or complex formation of integral membrane proteins into the membrane. Involved in integration of membrane proteins that insert both dependently and independently of the Sec translocase complex, as well as at least some lipoproteins. Aids folding of multispanning membrane proteins. In Histophilus somni (strain 2336) (Haemophilus somnus), this protein is Membrane protein insertase YidC.